We begin with the raw amino-acid sequence, 1008 residues long: PAN2-PAN3 deadenylation complex catalytic subunit PAN2 (1008 aa).

WD repeat units follow at residues 29–68, 110–149, 158–198, 200–236, and 277–316; these read GQLT…PYSR, PSLG…VTRV, HMAG…FSDV, VQDN…AMAP, and AEVA…SFAE. Residues 314–449 form a linker region; sequence FAEFSAPTAF…TCTEASMSSK (136 aa). A USP domain is found at 450–755; the sequence is KVPRLYRKLE…RTVMMVYAVG (306 aa). The Exonuclease domain maps to 808–976; the sequence is AIDAEFVVLK…EDSHTALLLY (169 aa). Residues Asp-810, Glu-812, Asp-915, and Asp-968 each coordinate a divalent metal cation.

It belongs to the peptidase C19 family. PAN2 subfamily. As to quaternary structure, forms a heterotrimer with an asymmetric homodimer of the regulatory subunit PAN3 to form the poly(A)-nuclease (PAN) deadenylation complex. A divalent metal cation is required as a cofactor.

It localises to the cytoplasm. The enzyme catalyses Exonucleolytic cleavage of poly(A) to 5'-AMP.. Its activity is regulated as follows. Positively regulated by the regulatory subunit PAN3. Catalytic subunit of the poly(A)-nuclease (PAN) deadenylation complex, one of two cytoplasmic mRNA deadenylases involved in mRNA turnover. PAN specifically shortens poly(A) tails of RNA and the activity is stimulated by poly(A)-binding protein PAB1. PAN deadenylation is followed by rapid degradation of the shortened mRNA tails by the CCR4-NOT complex. Deadenylated mRNAs are then degraded by two alternative mechanisms, namely exosome-mediated 3'-5' exonucleolytic degradation, or deadenylation-dependent mRNA decaping and subsequent 5'-3' exonucleolytic degradation by XRN1. May also be involved in post-transcriptional maturation of mRNA poly(A) tails. This Yarrowia lipolytica (strain CLIB 122 / E 150) (Yeast) protein is PAN2-PAN3 deadenylation complex catalytic subunit PAN2.